Consider the following 138-residue polypeptide: ATP synthase epsilon chain (138 aa).

The protein belongs to the ATPase epsilon chain family. F-type ATPases have 2 components, CF(1) - the catalytic core - and CF(0) - the membrane proton channel. CF(1) has five subunits: alpha(3), beta(3), gamma(1), delta(1), epsilon(1). CF(0) has three main subunits: a, b and c.

The protein localises to the cell inner membrane. In terms of biological role, produces ATP from ADP in the presence of a proton gradient across the membrane. This chain is ATP synthase epsilon chain, found in Psychrobacter sp. (strain PRwf-1).